A 308-amino-acid chain; its full sequence is Nodulation protein D 1 (308 aa).

Residues 6-63 (LDLNLLVALDALMTERNLTAAARSINLSQPAMSAAVGRLRVYFEDELFTMNGRELVLT) form the HTH lysR-type domain. The segment at residues 23–42 (LTAAARSINLSQPAMSAAVG) is a DNA-binding region (H-T-H motif).

The protein belongs to the LysR transcriptional regulatory family.

Its function is as follows. NodD regulates the expression of the nodABCFE genes which encode other nodulation proteins. NodD is also a negative regulator of its own expression. Binds flavonoids as inducers. The chain is Nodulation protein D 1 (nodD1) from Rhizobium tropici.